The following is a 103-amino-acid chain: Small ribosomal subunit protein uS14c (103 aa).

Residues 27–56 (SKKKIRSKVSPLSLSEKTKMQEKLQSLPRN) are disordered.

The protein belongs to the universal ribosomal protein uS14 family. In terms of assembly, part of the 30S ribosomal subunit.

It localises to the plastid. Its subcellular location is the chloroplast. Functionally, binds 16S rRNA, required for the assembly of 30S particles. This is Small ribosomal subunit protein uS14c from Zea mays (Maize).